An 871-amino-acid chain; its full sequence is Alanine--tRNA ligase (871 aa).

Residues histidine 590, histidine 594, cysteine 694, and histidine 698 each contribute to the Zn(2+) site.

The protein belongs to the class-II aminoacyl-tRNA synthetase family. Zn(2+) serves as cofactor.

The protein localises to the cytoplasm. The enzyme catalyses tRNA(Ala) + L-alanine + ATP = L-alanyl-tRNA(Ala) + AMP + diphosphate. Functionally, catalyzes the attachment of alanine to tRNA(Ala) in a two-step reaction: alanine is first activated by ATP to form Ala-AMP and then transferred to the acceptor end of tRNA(Ala). Also edits incorrectly charged Ser-tRNA(Ala) and Gly-tRNA(Ala) via its editing domain. In Thermoplasma acidophilum (strain ATCC 25905 / DSM 1728 / JCM 9062 / NBRC 15155 / AMRC-C165), this protein is Alanine--tRNA ligase.